The primary structure comprises 401 residues: Argininosuccinate synthase (401 aa).

8–16 (AYSGGLDTS) is an ATP binding site. Position 86 (Tyr86) interacts with L-citrulline. Gly116 serves as a coordination point for ATP. L-aspartate is bound by residues Thr118, Asn122, and Asp123. Position 122 (Asn122) interacts with L-citrulline. Positions 126, 174, 258, and 270 each coordinate L-citrulline.

This sequence belongs to the argininosuccinate synthase family. Type 1 subfamily. In terms of assembly, homotetramer.

The protein localises to the cytoplasm. It carries out the reaction L-citrulline + L-aspartate + ATP = 2-(N(omega)-L-arginino)succinate + AMP + diphosphate + H(+). The protein operates within amino-acid biosynthesis; L-arginine biosynthesis; L-arginine from L-ornithine and carbamoyl phosphate: step 2/3. The sequence is that of Argininosuccinate synthase from Acidothermus cellulolyticus (strain ATCC 43068 / DSM 8971 / 11B).